The sequence spans 597 residues: MAVDNSTSDAHTPGRQLTVVDIAIIAVYFALNVAVGIWSSCRASRNTVRGYFLAGRDMTWWPIGASLFASSEGSGLFIGLAGSGAAGGLAVAGFEWNATYVLLALAWVFVPIYLSSEIVTMPEYMQKRYGGQRIRMYLSVLSLLLSVFTKISIDLYAGALFVHICLGWNFYLSTVIMLAITALYTIAGGLTAVIYTDALQTLVMVAGAVILTIKAFEQIGGYEQLAEAYAQAVPSRTISNTTCHVPRADAMHMFRDPYTADLPWTGMTFGLTIMAAWYWCTDQVIVQRSLSARDLNHAKGGSILASYLKMLPMGLMVMPGMISRVLFPDDVGCVVPAECLRACGAEIGCSNIAYPKLVMELMPTGLRGLMVAVMMAALMSSLTSIFNSSSTLFTMDIWRRLRPRAGERELLLVGRLVIVVLVGVSVAWIPVLQGSNGGQLFIYMQSVTSSLAPPVTAVFVLGIFWRRANEQGAFWGLMAGLAVGATRLVLEFLHPAPPCGHPDTRPPILHGVHYLHFAVALFLLSGAVVVAGSLLTPHPQGVQIQSLTWWTLAQDLPLGVKTGDGRASQRHAFWARVCGVNAILLMCVNIFFYTYFA.

Residues 1-16 lie on the Extracellular side of the membrane; sequence MAVDNSTSDAHTPGRQ. N-linked (GlcNAc...) asparagine glycosylation occurs at Asn-5. The chain crosses the membrane as a helical span at residues 17–37; the sequence is LTVVDIAIIAVYFALNVAVGI. Over 38–73 the chain is Cytoplasmic; that stretch reads WSSCRASRNTVRGYFLAGRDMTWWPIGASLFASSEG. Residues 74–94 form a helical membrane-spanning segment; sequence SGLFIGLAGSGAAGGLAVAGF. Over 95 to 100 the chain is Extracellular; sequence EWNATY. The N-linked (GlcNAc...) asparagine glycan is linked to Asn-97. The chain crosses the membrane as a helical span at residues 101–121; the sequence is VLLALAWVFVPIYLSSEIVTM. Topologically, residues 122 to 139 are cytoplasmic; sequence PEYMQKRYGGQRIRMYLS. The chain crosses the membrane as a helical span at residues 140–162; it reads VLSLLLSVFTKISIDLYAGALFV. Topologically, residues 163–174 are extracellular; it reads HICLGWNFYLST. The chain crosses the membrane as a helical span at residues 175-195; that stretch reads VIMLAITALYTIAGGLTAVIY. Topologically, residues 196–201 are cytoplasmic; that stretch reads TDALQT. Residues 202-222 traverse the membrane as a helical segment; it reads LVMVAGAVILTIKAFEQIGGY. Residues 223-265 lie on the Extracellular side of the membrane; it reads EQLAEAYAQAVPSRTISNTTCHVPRADAMHMFRDPYTADLPWT. Residues 266-286 traverse the membrane as a helical segment; that stretch reads GMTFGLTIMAAWYWCTDQVIV. At 287–301 the chain is on the cytoplasmic side; the sequence is QRSLSARDLNHAKGG. A helical transmembrane segment spans residues 302-322; the sequence is SILASYLKMLPMGLMVMPGMI. Residues 323-367 are Extracellular-facing; that stretch reads SRVLFPDDVGCVVPAECLRACGAEIGCSNIAYPKLVMELMPTGLR. A helical membrane pass occupies residues 368–388; sequence GLMVAVMMAALMSSLTSIFNS. Residues 389-410 are Cytoplasmic-facing; that stretch reads SSTLFTMDIWRRLRPRAGEREL. Residues 411 to 431 form a helical membrane-spanning segment; it reads LLVGRLVIVVLVGVSVAWIPV. Over 432-444 the chain is Extracellular; that stretch reads LQGSNGGQLFIYM. The helical transmembrane segment at 445–465 threads the bilayer; sequence QSVTSSLAPPVTAVFVLGIFW. The Cytoplasmic portion of the chain corresponds to 466-472; the sequence is RRANEQG. A helical membrane pass occupies residues 473-493; that stretch reads AFWGLMAGLAVGATRLVLEFL. Topologically, residues 494-514 are extracellular; the sequence is HPAPPCGHPDTRPPILHGVHY. Residues 515–535 traverse the membrane as a helical segment; that stretch reads LHFAVALFLLSGAVVVAGSLL. Over 536–576 the chain is Cytoplasmic; that stretch reads TPHPQGVQIQSLTWWTLAQDLPLGVKTGDGRASQRHAFWAR. The chain crosses the membrane as a helical span at residues 577-597; it reads VCGVNAILLMCVNIFFYTYFA.

The protein belongs to the sodium:solute symporter (SSF) (TC 2.A.21) family. Predominantyl expressed in kidney. Also detected at very low levels in testes, skeletal muscle, and spleen.

It is found in the apical cell membrane. The catalysed reaction is D-mannose(out) + Na(+)(out) = D-mannose(in) + Na(+)(in). It catalyses the reaction D-fructopyranose(out) + Na(+)(out) = D-fructopyranose(in) + Na(+)(in). Functionally, electrogenic Na+-coupled sugar symporter that actively transports D-mannose or D-fructose at the plasma membrane, with a Na+ to sugar coupling ratio of 1:1. Transporter activity is driven by a transmembrane Na+ electrochemical gradient set by the Na+/K+ pump. Exclusively recognizes sugar substrates having a pyranose ring with an axial hydroxyl group on carbon 2. Has likely evolved to enable renal reabsorption of D-mannose, an important constituent of oligosaccharide chains of glycoproteins. Contributes to dietary D-fructose reabsorption from glomerular filtrate across the brush border of the kidney. This chain is Sodium/mannose cotransporter SLC5A10 (SLC5A10), found in Bos taurus (Bovine).